The sequence spans 744 residues: Cytosolic neutral trehalase (744 aa).

Aspartate 99, aspartate 101, asparagine 103, glutamine 105, and aspartate 110 together coordinate Ca(2+). Residues arginine 286, 293–294 (WD), asparagine 330, 339–341 (RSQ), glutamate 406, arginine 455, and glycine 458 each bind substrate. Residues aspartate 460 and glutamate 665 each act as proton donor/acceptor in the active site.

It belongs to the glycosyl hydrolase 37 family. Requires Ca(2+) as cofactor.

It localises to the cytoplasm. The enzyme catalyses alpha,alpha-trehalose + H2O = alpha-D-glucose + beta-D-glucose. It participates in carbohydrate degradation. In terms of biological role, hydrolyzes intracellular trehalose to glucose. The protein is Cytosolic neutral trehalase of Neurospora crassa (strain ATCC 24698 / 74-OR23-1A / CBS 708.71 / DSM 1257 / FGSC 987).